Consider the following 61-residue polypeptide: Small ribosomal subunit protein uS14B (61 aa).

Residues Cys24, Cys27, Cys40, and Cys43 each coordinate Zn(2+).

Belongs to the universal ribosomal protein uS14 family. Zinc-binding uS14 subfamily. In terms of assembly, part of the 30S ribosomal subunit. Contacts proteins S3 and S10. Zn(2+) is required as a cofactor.

Binds 16S rRNA, required for the assembly of 30S particles and may also be responsible for determining the conformation of the 16S rRNA at the A site. The protein is Small ribosomal subunit protein uS14B of Streptococcus pyogenes serotype M6 (strain ATCC BAA-946 / MGAS10394).